Here is a 341-residue protein sequence, read N- to C-terminus: uncharacterized protein (341 aa).

This is an uncharacterized protein from Methanocaldococcus jannaschii (strain ATCC 43067 / DSM 2661 / JAL-1 / JCM 10045 / NBRC 100440) (Methanococcus jannaschii).